We begin with the raw amino-acid sequence, 189 residues long: Chitin synthase 1 (189 aa).

Belongs to the chitin synthase family.

Its subcellular location is the cell membrane. It catalyses the reaction [(1-&gt;4)-N-acetyl-beta-D-glucosaminyl](n) + UDP-N-acetyl-alpha-D-glucosamine = [(1-&gt;4)-N-acetyl-beta-D-glucosaminyl](n+1) + UDP + H(+). In terms of biological role, polymerizes chitin, a structural polymer of the cell wall and septum, by transferring the sugar moiety of UDP-GlcNAc to the non-reducing end of the growing chitin polymer. The sequence is that of Chitin synthase 1 (CHS1) from Schizophyllum commune (Split gill fungus).